Consider the following 232-residue polypeptide: Large ribosomal subunit protein uL1 (232 aa).

It belongs to the universal ribosomal protein uL1 family. As to quaternary structure, part of the 50S ribosomal subunit.

Binds directly to 23S rRNA. The L1 stalk is quite mobile in the ribosome, and is involved in E site tRNA release. In terms of biological role, protein L1 is also a translational repressor protein, it controls the translation of the L11 operon by binding to its mRNA. The chain is Large ribosomal subunit protein uL1 from Bacillus pumilus (strain SAFR-032).